A 132-amino-acid chain; its full sequence is MRHKCLLAMAVVASMAFYSVISTKNVTQVDTVQQENRRLRPRVEPTANELDKQSDVDTKLEADRRLGYPGESGFMLEGELEERGGFPWRTFFLGLFASVIEERGGFPWRTFFLGLFASVIGVSIISACYGIT.

A signal peptide spans 1-22 (MRHKCLLAMAVVASMAFYSVIS). An N-linked (GlcNAc...) asparagine glycan is attached at Asn-25. A disordered region spans residues 36–57 (NRRLRPRVEPTANELDKQSDVD). The RxLR-dEER signature appears at 37–83 (RRLRPRVEPTANELDKQSDVDTKLEADRRLGYPGESGFMLEGELEER). Residues 111-131 (FFLGLFASVIGVSIISACYGI) traverse the membrane as a helical segment.

The protein belongs to the RxLR effector family. Interacts with host transcription factor NAC069.

It localises to the secreted. The protein localises to the host endoplasmic reticulum membrane. In terms of biological role, secreted effector that inhibits stress-induced relocalization of the transcription factor NAC069 to the nucleus, thus affecting its broad role in abiotic and biotic stress responses. This is Secreted RxLR effector protein BLR08 from Bremia lactucae (Lettuce downy mildew).